A 166-amino-acid polypeptide reads, in one-letter code: Large ribosomal subunit protein uL11 (166 aa).

This sequence belongs to the universal ribosomal protein uL11 family. Part of the ribosomal stalk of the 50S ribosomal subunit. Interacts with L10 and the large rRNA to form the base of the stalk. L10 forms an elongated spine to which L12 dimers bind in a sequential fashion forming a multimeric L10(L12)X complex.

In terms of biological role, forms part of the ribosomal stalk which helps the ribosome interact with GTP-bound translation factors. This is Large ribosomal subunit protein uL11 from Methanopyrus kandleri (strain AV19 / DSM 6324 / JCM 9639 / NBRC 100938).